The sequence spans 184 residues: Structural protein V8 (184 aa).

The disordered stretch occupies residues 14–35 (IYNKSNTLTNTPSNPTGNTNTL).

This sequence belongs to the sputnik virus V6 family.

The protein localises to the virion. The chain is Structural protein V8 from Sputnik virophage.